Consider the following 264-residue polypeptide: S-adenosylmethionine decarboxylase proenzyme (264 aa).

The Schiff-base intermediate with substrate; via pyruvic acid role is filled by serine 112. Pyruvic acid (Ser); by autocatalysis is present on serine 112. Histidine 117 acts as the Proton acceptor; for processing activity in catalysis. Cysteine 140 serves as the catalytic Proton donor; for catalytic activity.

This sequence belongs to the prokaryotic AdoMetDC family. Type 2 subfamily. As to quaternary structure, heterooctamer of four alpha and four beta chains arranged as a tetramer of alpha/beta heterodimers. Pyruvate serves as cofactor. In terms of processing, is synthesized initially as an inactive proenzyme. Formation of the active enzyme involves a self-maturation process in which the active site pyruvoyl group is generated from an internal serine residue via an autocatalytic post-translational modification. Two non-identical subunits are generated from the proenzyme in this reaction, and the pyruvate is formed at the N-terminus of the alpha chain, which is derived from the carboxyl end of the proenzyme. The post-translation cleavage follows an unusual pathway, termed non-hydrolytic serinolysis, in which the side chain hydroxyl group of the serine supplies its oxygen atom to form the C-terminus of the beta chain, while the remainder of the serine residue undergoes an oxidative deamination to produce ammonia and the pyruvoyl group blocking the N-terminus of the alpha chain.

The enzyme catalyses S-adenosyl-L-methionine + H(+) = S-adenosyl 3-(methylsulfanyl)propylamine + CO2. The protein operates within amine and polyamine biosynthesis; S-adenosylmethioninamine biosynthesis; S-adenosylmethioninamine from S-adenosyl-L-methionine: step 1/1. Functionally, catalyzes the decarboxylation of S-adenosylmethionine to S-adenosylmethioninamine (dcAdoMet), the propylamine donor required for the synthesis of the polyamines spermine and spermidine from the diamine putrescine. The sequence is that of S-adenosylmethionine decarboxylase proenzyme from Salmonella agona (strain SL483).